The chain runs to 1558 residues: Arginine-glutamic acid dipeptide repeats protein (1558 aa).

The span at 1–36 shows a compositional bias: basic and acidic residues; that stretch reads MTADKDKDKDKEKDRDRDRDRERDKRDKARESENAR. Residues 1–90 are disordered; the sequence is MTADKDKDKD…KKKSRYERTD (90 aa). 2 positions are modified to phosphoserine: serine 53 and serine 56. Over residues 74–85 the composition is skewed to basic residues; the sequence is KSRKKPPKKKSR. The BAH domain maps to 103 to 283; that stretch reads VVYRPGDCVY…PETRRLNSTQ (181 aa). Residue threonine 120 is modified to Phosphothreonine. A phosphoserine mark is found at serine 142 and serine 304. Residues 284–387 form the ELM2 domain; it reads GEIRVGPSHQ…KALQRLVKKP (104 aa). In terms of domain architecture, SANT spans 391-443; sequence LIEKCWTEDEVKRFVKGLRQYGKNFFRIRKELLPSKETGELITFYYYWKKTPE. The segment at 464–495 is disordered; it reads TRTASTPVNTPSRPPSSEFLDLSSASEDDFDS. Residues 465–474 are compositionally biased toward polar residues; that stretch reads RTASTPVNTP. Over residues 479 to 488 the composition is skewed to low complexity; that stretch reads SSEFLDLSSA. The GATA-type zinc-finger motif lies at 507 to 532; sequence CRHCFTTTSKDWHHGGRENILLCTDC. The disordered stretch occupies residues 542 to 1125; it reads LPPIEKPVDP…PSHASQSARF (584 aa). Lysine 560 participates in a covalent cross-link: Glycyl lysine isopeptide (Lys-Gly) (interchain with G-Cter in SUMO2). Threonine 593 carries the post-translational modification Phosphothreonine. Phosphoserine occurs at positions 594, 600, and 613. Over residues 609 to 623 the composition is skewed to low complexity; that stretch reads SGRNSPSAASTSSND. The segment covering 624–640 has biased composition (basic and acidic residues); sequence SKAETVKKSAKKVKEEA. Lysine 637 is covalently cross-linked (Glycyl lysine isopeptide (Lys-Gly) (interchain with G-Cter in SUMO2)). Residues serine 642, serine 656, serine 675, and serine 679 each carry the phosphoserine modification. Basic and acidic residues predominate over residues 652–673; the sequence is EKVASDTEDTDRITSKKTKTQE. Residues 688-708 are compositionally biased toward basic and acidic residues; the sequence is SDSRSVNDEGSSDPKDIDQDN. The span at 709-720 shows a compositional bias: polar residues; sequence RSTSPSIPSPQD. A compositionally biased stretch (low complexity) spans 726-752; sequence DSSAQQQMLQAQPPALQAPSGAASAPS. Residues 778-792 show a composition bias toward polar residues; the sequence is SPATSQPPNQTQSTV. Positions 806–823 are enriched in pro residues; that stretch reads LHPPRLPSPHPPLQPMTA. Low complexity-rich tracts occupy residues 824–857, 865–874, and 891–901; these read PPSQ…LLQH, GLPSQPSQGQ, and QLPASQSALQP. Pro residues predominate over residues 902–932; sequence QQPPREQPLPPAPLAMPHIKPPPTTPIPQLP. Positions 962-972 are enriched in low complexity; sequence KPLSSLSTHHP. A compositionally biased stretch (polar residues) spans 1012–1023; sequence HPTTGLHQVPSQ. Residues 1027–1053 show a composition bias toward pro residues; it reads PQHPFVPGGPPPITPPSCPPTSTPPAG. Positions 1054-1077 are enriched in low complexity; sequence PSSSSQPPCSAAVSSGGSVPGAPS. 3 positions are modified to phosphoserine: serine 1098, serine 1105, and serine 1107. The segment covering 1098–1109 has biased composition (pro residues); sequence SPPPPPRSPSPE. Threonine 1111 carries the post-translational modification Phosphothreonine. The stretch at 1148–1203 forms a coiled coil; the sequence is GSKLAKKREEAIEKAKREAEQKAREEREREKEKEKEREREREREREAERAAKASSS. Lysine 1150 is subject to N6-acetyllysine. Residues 1154-1198 show a composition bias toward basic and acidic residues; that stretch reads KREEAIEKAKREAEQKAREEREREKEKEKEREREREREREAERAA. A disordered region spans residues 1154–1238; the sequence is KREEAIEKAK…TTIAAVPPYI (85 aa). Tyrosine 1251 carries the post-translational modification Phosphotyrosine. Serine 1258 carries the phosphoserine modification.

As to quaternary structure, interacts with HDAC1 and ATN1. Interaction with ATN1 is improved when the poly-Gln region of ATN1 is extended. Interacts with FAT1.

It is found in the nucleus. The protein localises to the PML body. Functionally, plays a role as a transcriptional repressor during development. May play a role in the control of cell survival. This Mus musculus (Mouse) protein is Arginine-glutamic acid dipeptide repeats protein (Rere).